Consider the following 564-residue polypeptide: Proline--tRNA ligase (564 aa).

It belongs to the class-II aminoacyl-tRNA synthetase family. ProS type 1 subfamily. As to quaternary structure, homodimer.

The protein resides in the cytoplasm. It carries out the reaction tRNA(Pro) + L-proline + ATP = L-prolyl-tRNA(Pro) + AMP + diphosphate. In terms of biological role, catalyzes the attachment of proline to tRNA(Pro) in a two-step reaction: proline is first activated by ATP to form Pro-AMP and then transferred to the acceptor end of tRNA(Pro). As ProRS can inadvertently accommodate and process non-cognate amino acids such as alanine and cysteine, to avoid such errors it has two additional distinct editing activities against alanine. One activity is designated as 'pretransfer' editing and involves the tRNA(Pro)-independent hydrolysis of activated Ala-AMP. The other activity is designated 'posttransfer' editing and involves deacylation of mischarged Ala-tRNA(Pro). The misacylated Cys-tRNA(Pro) is not edited by ProRS. The chain is Proline--tRNA ligase from Xylella fastidiosa (strain Temecula1 / ATCC 700964).